A 291-amino-acid chain; its full sequence is MEMO1 family protein TON_0132 (291 aa).

Belongs to the MEMO1 family.

This is MEMO1 family protein TON_0132 from Thermococcus onnurineus (strain NA1).